The sequence spans 385 residues: Actin-2 (385 aa).

This sequence belongs to the actin family. ARP1 subfamily.

Its subcellular location is the cytoplasm. The protein localises to the cytoskeleton. The sequence is that of Actin-2 from Pneumocystis carinii.